We begin with the raw amino-acid sequence, 114 residues long: Non-specific lipid-transfer protein 1 (114 aa).

An N-terminal signal peptide occupies residues 1–23; sequence MEMVSKIACFVLLCMVVVAPHAE. Intrachain disulfides connect Cys27–Cys73, Cys37–Cys50, Cys51–Cys96, and Cys71–Cys110.

This sequence belongs to the plant LTP family.

Plant non-specific lipid-transfer proteins transfer phospholipids as well as galactolipids across membranes. May play a role in wax or cutin deposition in the cell walls of expanding epidermal cells and certain secretory tissues. This Solanum lycopersicum (Tomato) protein is Non-specific lipid-transfer protein 1 (TSW12).